A 295-amino-acid chain; its full sequence is Cutinase 11 (295 aa).

The first 17 residues, 1–17 (MQTSALLLAAQALVASA), serve as a signal peptide directing secretion. C25 and C102 are oxidised to a cystine. Catalysis depends on residues S113, D198, and H210. A disulfide bridge links C184 with C202. The interval 228 to 258 (KLNSGGSPPTTPPTTPPTTPPTTPPTTPPPS) is disordered. Pro residues predominate over residues 236–258 (PTTPPTTPPTTPPTTPPTTPPPS). The 36-residue stretch at 260-295 (SCAALYGQCGGQGWNGATCCSQGTCRASNQWYSQCL) folds into the CBM1 domain.

This sequence belongs to the cutinase family. Post-translationally, the 2 disulfide bonds play a critical role in holding the catalytic residues in juxta-position; reduction of the disulfide bridges results in the complete inactivation of the enzyme.

It localises to the secreted. The catalysed reaction is cutin + H2O = cutin monomers.. In terms of biological role, catalyzes the hydrolysis of complex carboxylic polyesters found in the cell wall of plants. May degrade cutin, a macromolecule that forms the structure of the plant cuticle. May also degrade suberin, a specialized macromolecule found in the cell wall of various plant tissues. Allows pathogenic fungi to penetrate through the cuticular barrier into the host plant during the initial stage of fungal infection. Involved in pathogenesis. The polypeptide is Cutinase 11 (Verticillium dahliae (Verticillium wilt)).